The following is a 77-amino-acid chain: Large ribosomal subunit protein bL28 (77 aa).

The protein belongs to the bacterial ribosomal protein bL28 family.

The polypeptide is Large ribosomal subunit protein bL28 (Polynucleobacter necessarius subsp. necessarius (strain STIR1)).